The chain runs to 218 residues: Nucleoid occlusion factor SlmA (218 aa).

The HTH tetR-type domain maps to 30-90; the sequence is ERRQQVLTVL…ALIEHIESTL (61 aa). Positions 53–72 form a DNA-binding region, H-T-H motif; the sequence is TTARLAKEVGVSEAALYRYF.

Belongs to the nucleoid occlusion factor SlmA family. In terms of assembly, homodimer. Interacts with FtsZ.

Its subcellular location is the cytoplasm. The protein resides in the nucleoid. Functionally, required for nucleoid occlusion (NO) phenomenon, which prevents Z-ring formation and cell division over the nucleoid. Acts as a DNA-associated cell division inhibitor that binds simultaneously chromosomal DNA and FtsZ, and disrupts the assembly of FtsZ polymers. SlmA-DNA-binding sequences (SBS) are dispersed on non-Ter regions of the chromosome, preventing FtsZ polymerization at these regions. This Haemophilus influenzae (strain PittGG) protein is Nucleoid occlusion factor SlmA.